An 800-amino-acid polypeptide reads, in one-letter code: Probable inorganic carbon transporter subunit DabA (800 aa).

4 residues coordinate Zn(2+): C329, D331, H488, and C503.

This sequence belongs to the inorganic carbon transporter (TC 9.A.2) DabA family. Forms a complex with DabB. The cofactor is Zn(2+).

The protein localises to the cell inner membrane. Part of an energy-coupled inorganic carbon pump. This Roseobacter denitrificans (strain ATCC 33942 / OCh 114) (Erythrobacter sp. (strain OCh 114)) protein is Probable inorganic carbon transporter subunit DabA.